The primary structure comprises 218 residues: GTP cyclohydrolase 1 (218 aa).

Residues C109, H112, and C180 each coordinate Zn(2+).

Belongs to the GTP cyclohydrolase I family. Toroid-shaped homodecamer, composed of two pentamers of five dimers.

The enzyme catalyses GTP + H2O = 7,8-dihydroneopterin 3'-triphosphate + formate + H(+). It participates in cofactor biosynthesis; 7,8-dihydroneopterin triphosphate biosynthesis; 7,8-dihydroneopterin triphosphate from GTP: step 1/1. The protein is GTP cyclohydrolase 1 of Haemophilus ducreyi (strain 35000HP / ATCC 700724).